The chain runs to 204 residues: NADH-quinone oxidoreductase subunit C (204 aa).

This sequence belongs to the complex I 30 kDa subunit family. NDH-1 is composed of 14 different subunits. Subunits NuoB, C, D, E, F, and G constitute the peripheral sector of the complex.

The protein resides in the cell inner membrane. It carries out the reaction a quinone + NADH + 5 H(+)(in) = a quinol + NAD(+) + 4 H(+)(out). NDH-1 shuttles electrons from NADH, via FMN and iron-sulfur (Fe-S) centers, to quinones in the respiratory chain. The immediate electron acceptor for the enzyme in this species is believed to be ubiquinone. Couples the redox reaction to proton translocation (for every two electrons transferred, four hydrogen ions are translocated across the cytoplasmic membrane), and thus conserves the redox energy in a proton gradient. This chain is NADH-quinone oxidoreductase subunit C, found in Polaromonas naphthalenivorans (strain CJ2).